The primary structure comprises 59 residues: Small, acid-soluble spore protein C1 (59 aa).

Belongs to the alpha/beta-type SASP family. In terms of processing, SASP are degraded in the first minutes of spore germination and provide amino acids for both new protein synthesis and metabolism.

In terms of biological role, SASP are bound to spore DNA. They are double-stranded DNA-binding proteins that cause DNA to change to an a-like conformation. They protect the DNA backbone from chemical and enzymatic cleavage and are thus involved in dormant spore's high resistance to UV light. The chain is Small, acid-soluble spore protein C1 (sspC1) from Clostridium perfringens (strain 13 / Type A).